A 181-amino-acid chain; its full sequence is MEVNKKQLADIFGASIRTIQNWQEQGMPVLRGGGKGNEVLYDSAAVIKWYAERDAEIENEKLRREVEELRQASEADLQPGTIEYERHRLTRAQADAQELKNARDSAEVVETAFCTFVLSRIAGEIASILDGLPLSVQRRFPELENRHVDFLKRDIIKAMNKAAALDELIPGLLSEYIEQSG.

The segment at 1-29 (MEVNKKQLADIFGASIRTIQNWQEQGMPV) is winged helix-turn-helix (wHTH). Position 31–36 (31–36 (RGGGKG)) interacts with ATP. Positions 52-109 (ERDAEIENEKLRREVEELRQASEADLQPGTIEYERHRLTRAQADAQELKNARDSAEVV) form a coiled coil. A self-assembly region spans residues 110-140 (ETAFCTFVLSRIAGEIASILDGLPLSVQRRF). Residues 141–180 (PELENRHVDFLKRDIIKAMNKAAALDELIPGLLSEYIEQS) form a binding to terminase large subunit region.

The protein belongs to the terminase small subunit family. Homodimer. Heterotrimer of two small and one large terminase subunits. The catalytically competent terminase is composed of a tetramer of heterotrimers. The tetramer forms a ring structure large enough to encircle duplex DNA. Host IHFA/IHFB induces bending of viral DNA to facilitate the assembly of the terminase tetramer of heterotrimers. Interacts (via C-terminus) with the terminase large subunit (via N-terminus).

The protein localises to the host cytoplasm. It catalyses the reaction ATP + H2O = ADP + phosphate + H(+). The small subunit is responsible for the binding to multiple recognition elements within the packaging initiation site cos. The terminase lies at a unique vertex of the procapsid and is composed of two subunits, a small terminase subunit involved in viral DNA recognition (binding to packaging sequence cos), and a large terminase subunit possessing endonucleolytic and ATPase activities (DNA maturation and packaging). The terminase binds, cooperatively with the host factor IHFA/IHFB, to the cos site at the junction of adjacent viral genomes in the concatemeric DNA. The endonuclease activity of the large subunit cleave the viral DNA generating 5'overhangs of 12 bp in length. The terminase remains bound to the left end of the genome to be packaged, forming a stable DNA-terminase complex. In a reaction facilitated by the viral assembly catalyst gpFI, the DNA-terminase complex binds to the portal of the procapsid and the terminase packages the viral DNA into the procapsid until the next cos site on the concatemer reaches the complex ('unit length' packaging). The downstream cos site is then cut generating the mature right end of the genome, the heterotrimer undocks from the DNA-filled head and remains bound to the left end of concatemer's next genome. The sequence is that of Terminase small subunit (Nu1) from Escherichia phage lambda (Bacteriophage lambda).